The primary structure comprises 530 residues: Metal transporter Nramp5 (530 aa).

A compositionally biased stretch (polar residues) spans 1–10; it reads MTGSTVSRQE. The tract at residues 1-53 is disordered; sequence MTGSTVSRQENSPKRPNDSNGEFKRLLVPETSQPEEDELHESPPENQILNVEE. The span at 11–27 shows a compositional bias: basic and acidic residues; the sequence is NSPKRPNDSNGEFKRLL. 12 consecutive transmembrane segments (helical) span residues 65-85, 98-118, 147-167, 179-199, 207-227, 253-273, 299-319, 341-361, 387-407, 429-449, 458-478, and 485-505; these read FSWA…IAFL, AVAG…GLLM, ILLW…EVIG, FLPI…ISYL, LEGL…WMFN, AVGV…SALV, AALF…AKGF, YGGG…AAGQ, LSAF…AIMF, IPFA…MGVF, LAWT…LDFF, and FLVG…IIYL.

Belongs to the NRAMP (TC 2.A.55) family.

It localises to the membrane. Functionally, seems to be involved in iron uptake. This Arabidopsis thaliana (Mouse-ear cress) protein is Metal transporter Nramp5 (NRAMP5).